A 314-amino-acid chain; its full sequence is Trimethylamine N-oxide-binding protein (314 aa).

Positions 1-24 are cleaved as a signal peptide; the sequence is MKKIVSLMSALVISVVSFAGISNA. Trimethylamine N-oxide is bound by residues W38, W85, E114, W164, and W212.

The complex is probably composed of two ATP-binding proteins (TmoW), two transmembrane proteins (TmoV) and a solute-binding protein (TmoX).

The protein localises to the periplasm. In terms of biological role, part of the ABC transporter complex TmoXWV involved in trimethylamine N-oxide (TMAO) import. Possesses a high binding affinity toward TMAO, but presents little binding affinity toward betaine, carnitine, trimethylamine (TMA) or dimethylamine (DMA). The protein is Trimethylamine N-oxide-binding protein of Pelagibacter ubique (strain HTCC1062).